A 130-amino-acid polypeptide reads, in one-letter code: MSMQDPLADMLTRIRNAQMAEKSVVSMPSSTLKVAVANVLQGEGYIAGYQVSGDVKPQLSIELKYFEGRPVIEELKRVSRPGLRQYKSVDQLPKVRGGLGVSIVSTNKGVMTDRAARAAGVGGEVLCTVF.

Belongs to the universal ribosomal protein uS8 family. As to quaternary structure, part of the 30S ribosomal subunit. Contacts proteins S5 and S12.

One of the primary rRNA binding proteins, it binds directly to 16S rRNA central domain where it helps coordinate assembly of the platform of the 30S subunit. The sequence is that of Small ribosomal subunit protein uS8 from Stutzerimonas stutzeri (strain A1501) (Pseudomonas stutzeri).